Here is a 44-residue protein sequence, read N- to C-terminus: Alpha-amylase inhibitor helianthamide (44 aa).

3 disulfide bridges follow: C6-C38, C16-C33, and C20-C39. The tract at residues 7–10 (YIYH) is inhibitory motif.

It belongs to the sea anemone alpha-amylase inhibitor family.

It is found in the secreted. Functionally, specific pancreatic alpha-amylase (AMY2A) inhibitor. The recombinant peptide inhibits human pancreatic (Ki=0.01 nM) and porcine pancreatic alpha-amylases (Ki=0.1 nM). In Stichodactyla helianthus (Sun anemone), this protein is Alpha-amylase inhibitor helianthamide.